Here is a 200-residue protein sequence, read N- to C-terminus: MSRLLRLSLSSRVWLAAQEATRNVSEDPVVCRTPWDGSPTCTAVRVVRAEVLADGTMDLDIVFPEAAVQAVFSRTPWQDSTTATSAEEPSASTDSISSDPLPISCVESFEDMDLRCYEQLSPSPESIETIEVFPPCSTCGGHEVNGFCSLCYLRGLTDLLPQADDAGEAEVPDESAKDLCFMDLLTWAMEDKTECSRHDE.

The interval 78 to 98 (QDSTTATSAEEPSASTDSISS) is disordered. The short motif at 114-118 (LRCYE) is the LXCXE motif, interaction with host RB1 element. A zinc finger spans residues 136–151 (CSTCGGHEVNGFCSLC). The Nuclear localization signal motif lies at 196–200 (SRHDE).

In terms of assembly, interaction with host RB1 induces the aberrant dissociation of RB1-E2F1 complex thereby disrupting RB1's activity.

Its function is as follows. E1A protein has both transforming and trans-activating activities. Plays a role in viral genome replication by driving entry of quiescent cells into the cell cycle. Disrupts the function of host retinoblastoma protein RB1/pRb and isoform early E1A 26 kDa protein stabilizes TP53, which are key regulators of the cell cycle. Induces the disassembly of the E2F1 transcription factors from RB1 by direct competition for the same binding site on RB1, with subsequent transcriptional activation of E2F1-regulated S-phase genes. Inactivation of the ability of RB1 to arrest the cell cycle is critical for cellular transformation, uncontrolled cellular growth and proliferation induced by viral infection. Stimulation of progression from G1 to S phase allows the virus to efficiently use the cellular DNA replicating machinery to achieve viral genome replication. This is Early E1A 21 kDa protein from Murine adenovirus A serotype 1 (MAdV-1).